Consider the following 105-residue polypeptide: Large ribosomal subunit protein uL24 (105 aa).

Belongs to the universal ribosomal protein uL24 family. In terms of assembly, part of the 50S ribosomal subunit.

One of two assembly initiator proteins, it binds directly to the 5'-end of the 23S rRNA, where it nucleates assembly of the 50S subunit. Functionally, one of the proteins that surrounds the polypeptide exit tunnel on the outside of the subunit. The protein is Large ribosomal subunit protein uL24 of Vibrio atlanticus (strain LGP32) (Vibrio splendidus (strain Mel32)).